We begin with the raw amino-acid sequence, 873 residues long: Potassium voltage-gated channel subfamily KQT member 3 (873 aa).

The tract at residues 1 to 41 (MGLKARRAAGAAGGGGGEGGGGGGGAANPAGGDSAVAGDEE) is disordered. At 1–121 (MGLKARRAAG…IYDALERPRG (121 aa)) the chain is on the cytoplasmic side. Positions 11–26 (AAGGGGGEGGGGGGGA) are enriched in gly residues. Residue threonine 82 is modified to Phosphothreonine. Residues 122–144 (WALLYHALVFLIVLGCLILAVLT) traverse the membrane as a helical segment. The Extracellular segment spans residues 145 to 154 (TFKEYETVSG). Residues 155–176 (DWLLLLETFAIFIFGAEFALRI) form a helical membrane-spanning segment. Residues 177–194 (WAAGCCCRYKGWRGRLKF) lie on the Cytoplasmic side of the membrane. The helical transmembrane segment at 195 to 214 (ARKPLCMLDIFVLIASVPVV) threads the bilayer. Over 215–226 (AVGNQGNVLATS) the chain is Extracellular. A helical; Voltage-sensor transmembrane segment spans residues 227–245 (LRSLRFLQILRMLRMDRRG). Residue arginine 244 participates in a 1,2-diacyl-sn-glycero-3-phospho-(1D-myo-inositol-4,5-bisphosphate) binding. At 246–257 (GTWKLLGSAICA) the chain is on the cytoplasmic side. Residues 258–283 (HSKELITAWYIGFLTLILSSFLVYLV) form a helical membrane-spanning segment. Position 260 (lysine 260) interacts with a 1,2-diacyl-sn-glycero-3-phospho-(1D-myo-inositol-4,5-bisphosphate). The Extracellular portion of the chain corresponds to 284–303 (EKDVPEMDAQGEEMKEEFET). Positions 304 to 316 (YADALWWGLITLA) form an intramembrane region, pore-forming. Residues 317 to 322 (TIGYGD) carry the Selectivity filter motif. The Extracellular portion of the chain corresponds to 317 to 327 (TIGYGDKTPKT). Residues 328–354 (WEGRLIAATFSLIGVSFFALPAGILGS) traverse the membrane as a helical segment. Residues 355–873 (GLALKVQEQH…SIWTPSNKPT (519 aa)) are Cytoplasmic-facing. The tract at residues 357–538 (ALKVQEQHRQ…RLYKKKFKET (182 aa)) is mediates interaction with calmodulin. Lysine 367 serves as a coordination point for a 1,2-diacyl-sn-glycero-3-phospho-(1D-myo-inositol-4,5-bisphosphate). Disordered regions lie at residues 575-603 (PGPP…PRNE), 723-742 (RGGP…GSTY), and 766-873 (ELQG…NKPT). Polar residues-rich tracts occupy residues 588-601 (KGSA…QSPR), 725-741 (GPSS…SGST), and 844-873 (DPFT…NKPT).

It belongs to the potassium channel family. KQT (TC 1.A.1.15) subfamily. Kv7.3/KCNQ3 sub-subfamily. Heterotetramer with KCNQ2; forms heterotetrameric native M-channel responsible for the M-current. Interacts with calmodulin; the interaction is calcium-independent, constitutive and participates in the proper assembly of a functional M-channel. Heteromultimer with KCNQ5. May associate with KCNE2. Interacts with IQCJ-SCHIP1. Interacts (via the pore module) with SLC5A3/SMIT1; forms a coregulatory complex that alters ion selectivity, voltage dependence and gating kinetics of the channel. Post-translationally, KCNQ2/KCNQ3 are ubiquitinated by NEDD4L. Ubiquitination leads to protein degradation. Degradation induced by NEDD4L is inhibited by USP36. As to expression, expressed in dorsal root ganglion (DRG) neurons.

It localises to the cell membrane. The catalysed reaction is K(+)(in) = K(+)(out). It carries out the reaction Rb(+)(in) = Rb(+)(out). It catalyses the reaction Cs(+)(in) = Cs(+)(out). The enzyme catalyses Na(+)(in) = Na(+)(out). Phosphatidylinositol-4,5-bisphosphate (PIP2) potentiates the activation of KCNQ channels by enhancing the electro-mechanical coupling of the voltage-sensing domain (VSD) and the pore-forming domain (PD). In the closed state of the channel, PIP2 is anchored at the S2-S3 loop; upon channel activation, PIP2 interacts with the S4-S5 linker and is involved in channel gating. Calcium suppresses KCNQ2-KCNQ3 channel currents, with calcium-bound calmodulin inducing a change in channel configuration which leads to the reduction of channel affinity for PIP2 and subsequent current suppression. Pore-forming subunit of the voltage-gated potassium (Kv) M-channel which is responsible for the M-current, a key controller of neuronal excitability. M-channel is composed of pore-forming subunits KCNQ2 and KCNQ3 assembled as heterotetramers. The native M-current has a slowly activating and deactivating potassium conductance which plays a critical role in determining the subthreshold electrical excitability of neurons as well as the responsiveness to synaptic inputs. M-channel is selectively permeable in vitro to other cations besides potassium, in decreasing order of affinity K(+) &gt; Rb(+) &gt; Cs(+) &gt; Na(+). M-channel association with SLC5A3/SMIT1 alters channel ion selectivity, increasing Na(+) and Cs(+) permeation relative to K(+). Suppressed by activation of M1 muscarinic acetylcholine receptors. KCNQ3 also associates with KCNQ5 to form a functional channel in vitro and may also contribute to the M-current in brain. In Mus musculus (Mouse), this protein is Potassium voltage-gated channel subfamily KQT member 3.